The sequence spans 440 residues: Microtubule-associated tumor suppressor 1 homolog (440 aa).

A coiled-coil region spans residues I106 to L401. S373, S394, S415, S425, S429, S431, S433, S434, and S438 each carry phosphoserine. The tract at residues G407–R440 is disordered. The segment covering S425–R440 has biased composition (low complexity).

Belongs to the MTUS1 family. In terms of assembly, homodimer. Interacts with AGTR2. Interacts with PTPN6. As to expression, present in neurons (at protein level).

Its subcellular location is the mitochondrion. The protein localises to the golgi apparatus. It localises to the cell membrane. The protein resides in the nucleus. In terms of biological role, cooperates with AGTR2 to inhibit ERK2 activation and cell proliferation. May be required for AGTR2 cell surface expression. Together with PTPN6, induces UBE2V2 expression upon angiotensin-II stimulation. The sequence is that of Microtubule-associated tumor suppressor 1 homolog (Mtus1) from Rattus norvegicus (Rat).